Here is a 75-residue protein sequence, read N- to C-terminus: Putative membrane protein insertion efficiency factor (75 aa).

This sequence belongs to the UPF0161 family.

The protein localises to the cell inner membrane. Functionally, could be involved in insertion of integral membrane proteins into the membrane. The chain is Putative membrane protein insertion efficiency factor from Leptospira biflexa serovar Patoc (strain Patoc 1 / ATCC 23582 / Paris).